The following is a 540-amino-acid chain: MPNKSSATSMRSGHIAPVVLTILDGWGHREENINNAINNADTPVMDALWQAYPHTLIEASGADVGLPDNQMGNSEVGHLTIGAGRIIQQELVRISNTIRSKKLDQITNLSNLANKLIETDKTLHLVGLCSDGGVHSHINHLCGLLEWAKNKGIQKVAVHAFTDGRDTPAKSSLQYLKIIKEKFEVLGIGELATLCGRYWSMDRDNRWERIEKAYELLTNPNYPLSELSSDEIITNSYDSSITDEFLEPIRLTPSYLKDGDGLIMFNFRPDRARQLIKSITLPSFSEFKRKYQPQLNVVTLTQYEMDLPVSVVFPPESLDNLLGQVISEHGLLQYRTAETEKYPHVTYFFNGGIEQPLPGEKRHLVPSPRVATYDLSPEMSAEKLTKSCQEAIESGIYSLIVINYANPDMVGHTGIHAATKKAISTVDKCIGKILDSTGKMSGTLLITADHGNAELMKGPDGEPWTAHTTNPVPVILIEGEKRKISGQGNQIRLREGGGLADIAPTLLEVLSLPKPDAMTGSSLIETIQTNSKTNLVQQHV.

Mn(2+)-binding residues include aspartate 24 and serine 74. Serine 74 functions as the Phosphoserine intermediate in the catalytic mechanism. Residues histidine 135, 165–166 (RD), arginine 197, arginine 203, 268–271 (RPDR), and lysine 341 each bind substrate. Mn(2+) contacts are provided by aspartate 408, histidine 412, aspartate 449, histidine 450, and histidine 467.

Belongs to the BPG-independent phosphoglycerate mutase family. Monomer. Mn(2+) serves as cofactor.

It carries out the reaction (2R)-2-phosphoglycerate = (2R)-3-phosphoglycerate. Its pathway is carbohydrate degradation; glycolysis; pyruvate from D-glyceraldehyde 3-phosphate: step 3/5. Its function is as follows. Catalyzes the interconversion of 2-phosphoglycerate and 3-phosphoglycerate. The sequence is that of 2,3-bisphosphoglycerate-independent phosphoglycerate mutase from Prochlorococcus marinus (strain SARG / CCMP1375 / SS120).